We begin with the raw amino-acid sequence, 399 residues long: Elongation factor Tu (399 aa).

In terms of domain architecture, tr-type G spans 10 to 209; sequence KPHVNIGTIG…EVDRYIPTPE (200 aa). Residues 19-26 are G1; it reads GHVDHGKT. 19-26 contacts GTP; that stretch reads GHVDHGKT. Residue Thr26 participates in Mg(2+) binding. Positions 60–64 are G2; the sequence is GITIA. The tract at residues 81–84 is G3; that stretch reads DCPG. Residues 81 to 85 and 136 to 139 contribute to the GTP site; these read DCPGH and NKED. The tract at residues 136–139 is G4; that stretch reads NKED. Residues 174–176 form a G5 region; that stretch reads SAL.

It belongs to the TRAFAC class translation factor GTPase superfamily. Classic translation factor GTPase family. EF-Tu/EF-1A subfamily. Monomer.

The protein resides in the cytoplasm. It catalyses the reaction GTP + H2O = GDP + phosphate + H(+). Its function is as follows. GTP hydrolase that promotes the GTP-dependent binding of aminoacyl-tRNA to the A-site of ribosomes during protein biosynthesis. In Wolinella succinogenes (strain ATCC 29543 / DSM 1740 / CCUG 13145 / JCM 31913 / LMG 7466 / NCTC 11488 / FDC 602W) (Vibrio succinogenes), this protein is Elongation factor Tu.